An 82-amino-acid chain; its full sequence is Splicing factor U2AF 35 kDa subunit (82 aa).

N-acetylalanine is present on A2. Residues 12 to 40 (EKDKVNCSFYFKIGACRHGDRCSRLHNKP) form a C3H1-type zinc finger. The residue at position 39 (K39) is an N6-methyllysine. The 18-residue stretch at 65 to 82 (SHCHVSDVEVQEHYDNFF) folds into the RRM domain.

It belongs to the splicing factor SR family. In terms of assembly, identified in the spliceosome C complex. Heterodimer with U2AF2. Interacts (via RS domain) with PHF5A (via N-terminus). Interacts with ZRANB2. Interacts with SDE2. Interacts with SF3B1.

Its subcellular location is the nucleus. It localises to the nucleus speckle. Its function is as follows. Plays a critical role in both constitutive and enhancer-dependent splicing by mediating protein-protein interactions and protein-RNA interactions required for accurate 3'-splice site selection. Recruits U2 snRNP to the branch point. Directly mediates interactions between U2AF2 and proteins bound to the enhancers and thus may function as a bridge between U2AF2 and the enhancer complex to recruit it to the adjacent intron. This Sus scrofa (Pig) protein is Splicing factor U2AF 35 kDa subunit (U2AF1).